Here is a 297-residue protein sequence, read N- to C-terminus: Tyrosine recombinase XerD (297 aa).

The Core-binding (CB) domain occupies 1 to 86 (MNDLIEDFLH…SLRSFFHYLM (86 aa)). The region spanning 107 to 291 (GLPKVLNLDD…TKLRLKDVYK (185 aa)) is the Tyr recombinase domain. Catalysis depends on residues R147, K171, H243, R246, and H269. Residue Y278 is the O-(3'-phospho-DNA)-tyrosine intermediate of the active site.

Belongs to the 'phage' integrase family. XerD subfamily. As to quaternary structure, forms a cyclic heterotetrameric complex composed of two molecules of XerC and two molecules of XerD.

Its subcellular location is the cytoplasm. Functionally, site-specific tyrosine recombinase, which acts by catalyzing the cutting and rejoining of the recombining DNA molecules. The XerC-XerD complex is essential to convert dimers of the bacterial chromosome into monomers to permit their segregation at cell division. It also contributes to the segregational stability of plasmids. In Listeria monocytogenes serovar 1/2a (strain ATCC BAA-679 / EGD-e), this protein is Tyrosine recombinase XerD.